A 218-amino-acid polypeptide reads, in one-letter code: Mitochondrial fission factor (218 aa).

The Cytoplasmic portion of the chain corresponds to 1–198 (MAEISRIQYE…ENKERAKREM (198 aa)). Threonine 89 bears the Phosphothreonine mark. 4 positions are modified to phosphoserine: serine 129, serine 131, serine 146, and serine 171. Residues 167-198 (VDAASLRRQIIKLNRRLQLLEEENKERAKREM) adopt a coiled-coil conformation. Residues 199-216 (VMYSITVAFWLLNSWLWF) traverse the membrane as a helical; Anchor for type IV membrane protein segment. At 217–218 (RR) the chain is on the mitochondrial intermembrane side.

It belongs to the Tango11 family. As to quaternary structure, homodimer. Interacts with DNM1L. Interacts with C11orf65/MFI; the interaction inhibits MFF interaction with DNM1L.

Its subcellular location is the mitochondrion outer membrane. The protein resides in the peroxisome. It is found in the cytoplasmic vesicle. The protein localises to the secretory vesicle. It localises to the synaptic vesicle. Functionally, plays a role in mitochondrial and peroxisomal fission. Promotes the recruitment and association of the fission mediator dynamin-related protein 1 (DNM1L) to the mitochondrial surface. May be involved in regulation of synaptic vesicle membrane dynamics by recruitment of DNM1L to clathrin-containing vesicles. The sequence is that of Mitochondrial fission factor (Mff) from Rattus norvegicus (Rat).